The sequence spans 502 residues: Neuronal acetylcholine receptor subunit alpha-7 (502 aa).

A signal peptide spans 1–22 (MCGGRGGIWLALAAALLHVSLQ). Residues 23–233 (GEFQRRLYKE…VTMRRRTLYY (211 aa)) lie on the Extracellular side of the membrane. 2 residues coordinate Ca(2+): R42 and V44. Residues N46, N90, and N133 are each glycosylated (N-linked (GlcNAc...) asparagine). A disulfide bridge links C150 with C164. S172 and Y210 together coordinate Ca(2+). A disulfide bridge connects residues C212 and C213. 3 helical membrane passes run 234–254 (GLNL…VFLL), 262–282 (ISLG…VAEI), and 295–315 (QYFA…VIVL). Residues 260-267 (EKISLGIT) form an essential for TMEM35A/NACHO-mediated proper subunit assembly and trafficking to cell membrane region. The Cytoplasmic segment spans residues 316 to 469 (RYHHHDPDGG…WKFAACVVDR (154 aa)). The helical transmembrane segment at 470 to 490 (LCLMAFSVFTIICTIGILMSA) threads the bilayer.

It belongs to the ligand-gated ion channel (TC 1.A.9) family. Acetylcholine receptor (TC 1.A.9.1) subfamily. Alpha-7/CHRNA7 sub-subfamily. Homopentamer. Can also form heteropentamers with CHRNB2, mainly found in basal forebrain cholinergic neurons. Interacts with RIC3; which is required for proper folding and assembly. Interacts with LYPD6. Interacts with CANX. Glycosylations at Asn-46, Asn-90 and Asn-133 are essential for TMEM35A/NACHO-mediated proper subunit assembly and trafficking to the cell membrane. Expressed in neurons. Expressed in umbrella cells of urothelium (at protein level).

The protein resides in the postsynaptic cell membrane. Its subcellular location is the cell membrane. The catalysed reaction is Ca(2+)(in) = Ca(2+)(out). It catalyses the reaction K(+)(in) = K(+)(out). The enzyme catalyses Na(+)(in) = Na(+)(out). It carries out the reaction choline(out) = choline(in). The catalysed reaction is NH4(+)(in) = NH4(+)(out). It catalyses the reaction L-arginine(in) = L-arginine(out). The enzyme catalyses guanidine(out) = guanidine(in). With respect to regulation, activated by a myriad of ligands such as acetylcholine, cytisine, nicotine, choline and epibatidine. Oligomeric amyloid-beta protein 42 activates specifially CHRNA7:CHRNB2 nAchRs. Activity is modulated by positive allosteric modulators (PAMs), such as flavonoids, with a wide range of chemical diversity, pharmacological sensitivity and efficacy. AChR activity is inhibited by the antagonists alpha-conotoxons RgIA, ImI and ImII, small disulfide-constrained peptides from cone snails. Alpha-conotoxin PnIC selectively inhibits CHRNA7:CHRNB2 over CHRNA7 homopentamer. Functionally, component of neuronal acetylcholine receptors (nAChRs) that function as pentameric, ligand-gated cation channels with high calcium permeability among other activities. nAChRs are excitatory neurotrasnmitter receptors formed by a collection of nAChR subunits known to mediate synaptic transmission in the nervous system and the neuromuscular junction. Each nAchR subunit confers differential attributes to channel properties, including activation, deactivation and desensitization kinetics, pH sensitivity, cation permeability, and binding to allosteric modulators. CHRNA7 forms homopentameric neuronal acetylcholine receptors abundantly expressed in the central nervous system, characterized by fast desensitization and high calcium permeability. Also forms heteropentamers with CHRNB2, mainly expressed in basal forebrain cholinergic neurons. Involved in the modulation of calcium-dependent signaling pathways and influences the release of neurotransmitters, including dopamine, glutamate and GABA. Also expressed in non-neuronal cells such as immune cells like lymphocytes, monocytes and macrophages. In T cells, activation induces metabotropic signaling that results in an increase of intracellular Ca2+ concentrations, independent of ionotropic receptor functions. In macrophages, required for acetylcholine-mediated inhibition of TNF and other inflammatory cytokine release. Once activated by acetylcholine, nicotine or other agonists, selectively inhibits production of pro-inflammatory cytokines while leaving anti-inflammatory cytokines undisturbed. Stimulates the cholinergic anti-inflammatory pathway, controlling inflammation by inhibiting NFKB nuclear translocation and activating the JAK2-STAT3 pathway, independently of ion channel activity. Also expressed in the urothelium where it modulates reflex bladder activity by increasing intracellular calcium through internal stores and decreasing basal ATP release. This chain is Neuronal acetylcholine receptor subunit alpha-7 (Chrna7), found in Rattus norvegicus (Rat).